A 238-amino-acid chain; its full sequence is tRNA (guanine-N(7)-)-methyltransferase (238 aa).

The S-adenosyl-L-methionine site is built by E68, E93, D120, and D143. D143 is an active-site residue. Substrate contacts are provided by residues K147, D179, and 216–219; that span reads TKFE.

Belongs to the class I-like SAM-binding methyltransferase superfamily. TrmB family.

It catalyses the reaction guanosine(46) in tRNA + S-adenosyl-L-methionine = N(7)-methylguanosine(46) in tRNA + S-adenosyl-L-homocysteine. Its pathway is tRNA modification; N(7)-methylguanine-tRNA biosynthesis. Catalyzes the formation of N(7)-methylguanine at position 46 (m7G46) in tRNA. In Shewanella putrefaciens (strain CN-32 / ATCC BAA-453), this protein is tRNA (guanine-N(7)-)-methyltransferase.